Reading from the N-terminus, the 548-residue chain is 2-succinyl-5-enolpyruvyl-6-hydroxy-3-cyclohexene-1-carboxylate synthase (548 aa).

The protein belongs to the TPP enzyme family. MenD subfamily. In terms of assembly, homodimer. Requires Mg(2+) as cofactor. The cofactor is Mn(2+). It depends on thiamine diphosphate as a cofactor.

It carries out the reaction isochorismate + 2-oxoglutarate + H(+) = 5-enolpyruvoyl-6-hydroxy-2-succinyl-cyclohex-3-ene-1-carboxylate + CO2. It functions in the pathway quinol/quinone metabolism; 1,4-dihydroxy-2-naphthoate biosynthesis; 1,4-dihydroxy-2-naphthoate from chorismate: step 2/7. Its pathway is quinol/quinone metabolism; menaquinone biosynthesis. Catalyzes the thiamine diphosphate-dependent decarboxylation of 2-oxoglutarate and the subsequent addition of the resulting succinic semialdehyde-thiamine pyrophosphate anion to isochorismate to yield 2-succinyl-5-enolpyruvyl-6-hydroxy-3-cyclohexene-1-carboxylate (SEPHCHC). This chain is 2-succinyl-5-enolpyruvyl-6-hydroxy-3-cyclohexene-1-carboxylate synthase, found in Mycolicibacterium vanbaalenii (strain DSM 7251 / JCM 13017 / BCRC 16820 / KCTC 9966 / NRRL B-24157 / PYR-1) (Mycobacterium vanbaalenii).